Consider the following 574-residue polypeptide: ATP-dependent RNA helicase RhlB (574 aa).

The Q motif motif lies at 9 to 37 (VTFSSFDLHPALVAGLESAGFTRCTPIQA). Residues 40–220 (LPVALPGGDV…YEHMNEPEKL (181 aa)) enclose the Helicase ATP-binding domain. 53–60 (AQTGTGKT) contributes to the ATP binding site. The short motif at 166–169 (DEAD) is the DEAD box element. The Helicase C-terminal domain occupies 231-393 (RVRQRIYFPS…PVTSELLTPL (163 aa)). Residues 423–432 (EQRAAEEQRR) are compositionally biased toward basic and acidic residues. Residues 423-574 (EQRAAEEQRR…RRLRSLVSGN (152 aa)) form a disordered region. Over residues 435–449 (GRSGPGGGSRSGSGG) the composition is skewed to gly residues. The span at 477-495 (AAAAQTEKPVVAAAAAQAP) shows a compositional bias: low complexity. The span at 506 to 515 (PRKRRRRRNG) shows a compositional bias: basic residues. 2 stretches are compositionally biased toward low complexity: residues 523–535 (PAVASTPIAAPAA) and 553–562 (SSGSPSLLGR).

This sequence belongs to the DEAD box helicase family. RhlB subfamily. As to quaternary structure, component of the RNA degradosome, which is a multiprotein complex involved in RNA processing and mRNA degradation.

The protein localises to the cytoplasm. The enzyme catalyses ATP + H2O = ADP + phosphate + H(+). Functionally, DEAD-box RNA helicase involved in RNA degradation. Has RNA-dependent ATPase activity and unwinds double-stranded RNA. The chain is ATP-dependent RNA helicase RhlB from Xanthomonas oryzae pv. oryzae (strain KACC10331 / KXO85).